The chain runs to 702 residues: Elongation factor G (702 aa).

Residues 8–290 enclose the tr-type G domain; the sequence is ERYRNIGISA…AVIEYLPAPT (283 aa). GTP contacts are provided by residues 17-24, 88-92, and 142-145; these read AHIDAGKT, DTPGH, and NKMD.

The protein belongs to the TRAFAC class translation factor GTPase superfamily. Classic translation factor GTPase family. EF-G/EF-2 subfamily.

Its subcellular location is the cytoplasm. Its function is as follows. Catalyzes the GTP-dependent ribosomal translocation step during translation elongation. During this step, the ribosome changes from the pre-translocational (PRE) to the post-translocational (POST) state as the newly formed A-site-bound peptidyl-tRNA and P-site-bound deacylated tRNA move to the P and E sites, respectively. Catalyzes the coordinated movement of the two tRNA molecules, the mRNA and conformational changes in the ribosome. This Yersinia pseudotuberculosis serotype O:1b (strain IP 31758) protein is Elongation factor G.